The following is a 414-amino-acid chain: Patatin-like protein 1 (414 aa).

Residues 20–224 (LAIDGGGIRG…AANNPTMVAM (205 aa)) enclose the PNPLA domain. Residues 24–29 (GGGIRG) carry the GXGXXG motif. A GXSXG motif is present at residues 62–66 (GTSTG). Ser64 acts as the Nucleophile in catalysis. Residue Asp211 is the Proton acceptor of the active site. Residues 211 to 213 (DGG) carry the DGA/G motif.

Belongs to the patatin family.

Its function is as follows. Possesses non-specific lipolytic acyl hydrolase (LAH) activity. Hydrolyzes phospholipids as well as galactolipids. May play a role in disease resistance. The sequence is that of Patatin-like protein 1 (PLP1) from Oryza sativa subsp. indica (Rice).